We begin with the raw amino-acid sequence, 213 residues long: Adenylate kinase (213 aa).

10–15 (GAGKGT) is a binding site for ATP. An NMP region spans residues 30 to 59 (STGNLLRDEVKSKTDLGVDIEKLISNGKFV). AMP-binding positions include threonine 31, arginine 36, 57–59 (KFV), 85–88 (GYPR), and glutamine 92. Residues 126 to 162 (GRMTCEKCNMTLNEYFNKEQIELHPCGVEHLKKRKDD) are LID. Arginine 127 is a binding site for ATP. AMP contacts are provided by arginine 159 and arginine 170. Position 198 (glycine 198) interacts with ATP.

This sequence belongs to the adenylate kinase family. In terms of assembly, monomer.

It localises to the cytoplasm. It carries out the reaction AMP + ATP = 2 ADP. The protein operates within purine metabolism; AMP biosynthesis via salvage pathway; AMP from ADP: step 1/1. Functionally, catalyzes the reversible transfer of the terminal phosphate group between ATP and AMP. Plays an important role in cellular energy homeostasis and in adenine nucleotide metabolism. This Pelagibacter ubique (strain HTCC1062) protein is Adenylate kinase.